A 475-amino-acid polypeptide reads, in one-letter code: Stromelysin-1 (475 aa).

A signal peptide spans 1 to 17 (MKGLPVLLWLCTAVCSS). Positions 18-97 (YPLHGSEEDA…PRCGVPDVGG (80 aa)) are cleaved as a propeptide — activation peptide. The Cysteine switch signature appears at 88–95 (PRCGVPDV). A Zn(2+)-binding site is contributed by C90. The N-linked (GlcNAc...) asparagine glycan is linked to N118. Ca(2+) is bound by residues D122 and D156. 2 residues coordinate Zn(2+): H166 and D168. The Ca(2+) site is built by D173, G174, G176, and V178. H181 lines the Zn(2+) pocket. Ca(2+)-binding residues include G188, N190, and D192. H194 lines the Zn(2+) pocket. Positions 196, 197, and 199 each coordinate Ca(2+). H216 contributes to the Zn(2+) binding site. E217 is an active-site residue. Zn(2+) contacts are provided by H220 and H226. 4 Hemopexin repeats span residues 285–334 (LPMC…WPSL), 335–381 (PSNM…GLPE), 383–431 (VQKI…FPGI), and 432–475 (GTKV…WFNC). A disulfide bridge links C288 with C475. A Ca(2+)-binding site is contributed by D295. The Ca(2+) site is built by D387 and D436.

This sequence belongs to the peptidase M10A family. The cofactor is Ca(2+). Zn(2+) is required as a cofactor.

The protein localises to the secreted. It is found in the extracellular space. Its subcellular location is the extracellular matrix. The enzyme catalyses Preferential cleavage where P1', P2' and P3' are hydrophobic residues.. Its activity is regulated as follows. Inhibited by a synthetic peptide corresponding to the inhibitory cysteine switch motif. Inhibited by ethylenediaminetetraacetic acid (EDTA), 1,10-pheanthroline, 2-mecaptoethanol, dithiothreitol and metalloproteinase inhibitor protein TIMP. Functionally, can degrade fibronectin, laminin, gelatins of type I, III, IV, and V; collagens III, IV, X, and IX, and cartilage proteoglycans. Activates procollagenase. Metalloproteinase with a rather broad substrate specificity that can degrade fibronectin, laminin, gelatins of type I, III, IV, and V; collagens III, IV, X, and IX, and cartilage proteoglycans. Activates different molecules including growth factors, plasminogen or other matrix metalloproteinases such as MMP9. Once released into the extracellular matrix (ECM), the inactive pro-enzyme is activated by the plasmin cascade signaling pathway. Also acts intracellularly. For example, in dopaminergic neurons, gets activated by the serine protease HTRA2 upon stress and plays a pivotal role in DA neuronal degeneration by mediating microglial activation and alpha-synuclein/SNCA cleavage. In addition, plays a role in immune response and possesses antiviral activity against various viruses. Mechanistically, translocates from the cytoplasm into the cell nucleus upon virus infection to influence NF-kappa-B activities. The chain is Stromelysin-1 (Mmp3) from Rattus norvegicus (Rat).